Consider the following 129-residue polypeptide: Glycine cleavage system H protein 2 (129 aa).

The Lipoyl-binding domain occupies 24-105 (SVTVGISDHA…PYVSWFFKLK (82 aa)). At K65 the chain carries N6-lipoyllysine.

The protein belongs to the GcvH family. In terms of assembly, the glycine cleavage system is composed of four proteins: P, T, L and H. The cofactor is (R)-lipoate.

Functionally, the glycine cleavage system catalyzes the degradation of glycine. The H protein shuttles the methylamine group of glycine from the P protein to the T protein. The chain is Glycine cleavage system H protein 2 from Pseudomonas aeruginosa (strain ATCC 15692 / DSM 22644 / CIP 104116 / JCM 14847 / LMG 12228 / 1C / PRS 101 / PAO1).